The chain runs to 297 residues: Ezy-1 protein (297 aa).

Disordered regions lie at residues 1–34 (MAAV…GDGG), 115–151 (FTGK…SSSS), and 255–297 (QPAG…SPNM). Residues 123–135 (AEGDDGEDEEEGE) are compositionally biased toward acidic residues. The segment covering 136–150 (AQGVGKDAVDSSSSS) has biased composition (low complexity). Positions 259-269 (DGHEPEPKRPE) are enriched in basic and acidic residues.

In Chlamydomonas reinhardtii (Chlamydomonas smithii), this protein is Ezy-1 protein (Ezy-1).